The following is a 193-amino-acid chain: dTTP/UTP pyrophosphatase (193 aa).

The active-site Proton acceptor is Asp-71.

It belongs to the Maf family. YhdE subfamily. Requires a divalent metal cation as cofactor.

The protein localises to the cytoplasm. The enzyme catalyses dTTP + H2O = dTMP + diphosphate + H(+). It carries out the reaction UTP + H2O = UMP + diphosphate + H(+). Nucleoside triphosphate pyrophosphatase that hydrolyzes dTTP and UTP. May have a dual role in cell division arrest and in preventing the incorporation of modified nucleotides into cellular nucleic acids. This is dTTP/UTP pyrophosphatase from Dictyoglomus turgidum (strain DSM 6724 / Z-1310).